Reading from the N-terminus, the 173-residue chain is MSIILGIDPGSRITGYGVIRQVGRQLTYLGSGCIRTKVDDLPSRLKLIYAGVTEIITQFQPDYFAIEQVFMAKNADSALKLGQVRGVAIVAAVNQELPVFEYAARQVKQTVVGIGSAEKSQVQHMVRTLLKLPANPQADAADALAIAITHCHVSQNVMQMSESRLNLARGRLR.

Residues Asp8, Glu67, and Asp139 contribute to the active site. The Mg(2+) site is built by Asp8, Glu67, and Asp139.

It belongs to the RuvC family. Homodimer which binds Holliday junction (HJ) DNA. The HJ becomes 2-fold symmetrical on binding to RuvC with unstacked arms; it has a different conformation from HJ DNA in complex with RuvA. In the full resolvosome a probable DNA-RuvA(4)-RuvB(12)-RuvC(2) complex forms which resolves the HJ. It depends on Mg(2+) as a cofactor.

The protein localises to the cytoplasm. The catalysed reaction is Endonucleolytic cleavage at a junction such as a reciprocal single-stranded crossover between two homologous DNA duplexes (Holliday junction).. The RuvA-RuvB-RuvC complex processes Holliday junction (HJ) DNA during genetic recombination and DNA repair. Endonuclease that resolves HJ intermediates. Cleaves cruciform DNA by making single-stranded nicks across the HJ at symmetrical positions within the homologous arms, yielding a 5'-phosphate and a 3'-hydroxyl group; requires a central core of homology in the junction. The consensus cleavage sequence is 5'-(A/T)TT(C/G)-3'. Cleavage occurs on the 3'-side of the TT dinucleotide at the point of strand exchange. HJ branch migration catalyzed by RuvA-RuvB allows RuvC to scan DNA until it finds its consensus sequence, where it cleaves and resolves the cruciform DNA. This chain is Crossover junction endodeoxyribonuclease RuvC, found in Salmonella choleraesuis (strain SC-B67).